Here is a 235-residue protein sequence, read N- to C-terminus: 2-C-methyl-D-erythritol 4-phosphate cytidylyltransferase (235 aa).

The protein belongs to the IspD/TarI cytidylyltransferase family. IspD subfamily.

The catalysed reaction is 2-C-methyl-D-erythritol 4-phosphate + CTP + H(+) = 4-CDP-2-C-methyl-D-erythritol + diphosphate. The protein operates within isoprenoid biosynthesis; isopentenyl diphosphate biosynthesis via DXP pathway; isopentenyl diphosphate from 1-deoxy-D-xylulose 5-phosphate: step 2/6. In terms of biological role, catalyzes the formation of 4-diphosphocytidyl-2-C-methyl-D-erythritol from CTP and 2-C-methyl-D-erythritol 4-phosphate (MEP). The polypeptide is 2-C-methyl-D-erythritol 4-phosphate cytidylyltransferase (Pseudomonas entomophila (strain L48)).